We begin with the raw amino-acid sequence, 343 residues long: tRNA N6-adenosine threonylcarbamoyltransferase (343 aa).

Residues His115 and His119 each contribute to the Fe cation site. Substrate is bound by residues 137–141, Asp170, Gly183, Asp187, and Asn276; that span reads IVSGG. Asp304 provides a ligand contact to Fe cation.

The protein belongs to the KAE1 / TsaD family. Fe(2+) is required as a cofactor.

It is found in the cytoplasm. The enzyme catalyses L-threonylcarbamoyladenylate + adenosine(37) in tRNA = N(6)-L-threonylcarbamoyladenosine(37) in tRNA + AMP + H(+). Its function is as follows. Required for the formation of a threonylcarbamoyl group on adenosine at position 37 (t(6)A37) in tRNAs that read codons beginning with adenine. Is involved in the transfer of the threonylcarbamoyl moiety of threonylcarbamoyl-AMP (TC-AMP) to the N6 group of A37, together with TsaE and TsaB. TsaD likely plays a direct catalytic role in this reaction. The polypeptide is tRNA N6-adenosine threonylcarbamoyltransferase (Staphylococcus carnosus (strain TM300)).